The following is a 72-amino-acid chain: MVCIPCIVIPVLLWIFKKFLEPYIYPVVSRIWPRKAVQQLDNKNTGKVDCKGADTNGFSTKGPTEVSDKKKD.

The tract at residues 1–33 (MVCIPCIVIPVLLWIFKKFLEPYIYPVVSRIWP) is necessary for its localzation to the endoplasmic reticulum and lipid droplets. The segment at 45–72 (TGKVDCKGADTNGFSTKGPTEVSDKKKD) is disordered.

It belongs to the UPF0729 family. As to quaternary structure, interacts with DERL1 and AMFR. In terms of processing, undergoes ER-associated degradation (ERAD).

Its subcellular location is the endoplasmic reticulum. The protein localises to the lipid droplet. Functionally, may activate the NF-kappa-B signaling pathway. The chain is UPF0729 protein C18orf32 homolog from Rattus norvegicus (Rat).